A 572-amino-acid polypeptide reads, in one-letter code: Proline--tRNA ligase (572 aa).

It belongs to the class-II aminoacyl-tRNA synthetase family. ProS type 1 subfamily. Homodimer.

Its subcellular location is the cytoplasm. The enzyme catalyses tRNA(Pro) + L-proline + ATP = L-prolyl-tRNA(Pro) + AMP + diphosphate. Functionally, catalyzes the attachment of proline to tRNA(Pro) in a two-step reaction: proline is first activated by ATP to form Pro-AMP and then transferred to the acceptor end of tRNA(Pro). As ProRS can inadvertently accommodate and process non-cognate amino acids such as alanine and cysteine, to avoid such errors it has two additional distinct editing activities against alanine. One activity is designated as 'pretransfer' editing and involves the tRNA(Pro)-independent hydrolysis of activated Ala-AMP. The other activity is designated 'posttransfer' editing and involves deacylation of mischarged Ala-tRNA(Pro). The misacylated Cys-tRNA(Pro) is not edited by ProRS. This is Proline--tRNA ligase from Erwinia tasmaniensis (strain DSM 17950 / CFBP 7177 / CIP 109463 / NCPPB 4357 / Et1/99).